The primary structure comprises 322 residues: Protein-L-isoaspartate O-methyltransferase (322 aa).

The interval 1–101 (MSGERAKRFP…AKQGDRSAAP (101 aa)) is disordered. Basic and acidic residues predominate over residues 14-29 (EDLKREPRKPEGRVAE). 2 stretches are compositionally biased toward low complexity: residues 33-51 (AGDAARQRLTAAAAAPAAA) and 76-91 (HAPAAPGAAKRAPQGG). S170 is a catalytic residue.

This sequence belongs to the methyltransferase superfamily. L-isoaspartyl/D-aspartyl protein methyltransferase family.

The protein localises to the cytoplasm. The catalysed reaction is [protein]-L-isoaspartate + S-adenosyl-L-methionine = [protein]-L-isoaspartate alpha-methyl ester + S-adenosyl-L-homocysteine. In terms of biological role, catalyzes the methyl esterification of L-isoaspartyl residues in peptides and proteins that result from spontaneous decomposition of normal L-aspartyl and L-asparaginyl residues. It plays a role in the repair and/or degradation of damaged proteins. The sequence is that of Protein-L-isoaspartate O-methyltransferase from Burkholderia pseudomallei (strain 1710b).